The sequence spans 1141 residues: IgM protease (1141 aa).

Positions 1–32 (MNIQERFSLRKSAVGLVSVSLLCAIYTSTVAA) are cleaved as a signal peptide. The Nucleophile role is filled by Cys-195. Disordered stretches follow at residues 518–544 (PDLP…STNL), 725–749 (EKDS…NVET), 781–805 (LEKD…TNVE), and 839–860 (EKDS…ESTS). The segment covering 526-544 (STVSDVDSLSSQETSSTNL) has biased composition (polar residues). Composition is skewed to low complexity over residues 738–749 (EPTSSESTNVET) and 795–805 (EPTSSESTNVE). Residues 1119–1136 (IMGVGLLTLVLGSALGLL) traverse the membrane as a helical segment.

It belongs to the peptidase C66 family.

It is found in the cell membrane. The protein localises to the secreted. With respect to regulation, igM cleavage is inhibited by iodoacetamide but not by AEBSF, bestatin, E-64, Z-LVG-CHN(2), or EDTA. Functionally, catalyzes the specific cleavage of porcine IgM bound to the bacterial surface. Can degrade only IgM but neither IgG nor IgA, and is host specific, as it exclusively cleaves porcine IgM but not IgM from six other species, including human, mouse and a closely related member of the Suidae family. Promotes survival in porcine blood. Is thus involved in a so-far-unknown mechanism of host-pathogen interaction at an early stage of the host immune response. The chain is IgM protease (ide) from Streptococcus suis (strain P1/7).